The sequence spans 169 residues: Ribosome maturation factor RimM (169 aa).

A PRC barrel domain is found at G93 to L166.

It belongs to the RimM family. As to quaternary structure, binds ribosomal protein uS19.

It localises to the cytoplasm. An accessory protein needed during the final step in the assembly of 30S ribosomal subunit, possibly for assembly of the head region. Essential for efficient processing of 16S rRNA. May be needed both before and after RbfA during the maturation of 16S rRNA. It has affinity for free ribosomal 30S subunits but not for 70S ribosomes. The polypeptide is Ribosome maturation factor RimM (Exiguobacterium sibiricum (strain DSM 17290 / CCUG 55495 / CIP 109462 / JCM 13490 / 255-15)).